We begin with the raw amino-acid sequence, 91 residues long: UPF0386 protein Caul_4643 (91 aa).

It belongs to the UPF0386 family.

This chain is UPF0386 protein Caul_4643, found in Caulobacter sp. (strain K31).